The following is a 195-amino-acid chain: MGSRASTLLRDEELEEIKKETGFSHSQITRLYSRFTSLDKGENGTLSREDFQRIPELAINPLGDRIINAFFPEGEDQVNFRGFMRTLAHFRPIEDNEKSKDVNGPEPLNSRSNKLHFAFRLYDLDKDEKISRDELLQVLRMMVGVNISDEQLGSIADRTIQEADQDGDSAISFTEFVKVLEKVDVEQKMSIRFLH.

Gly2 carries the N-myristoyl glycine lipid modification. The Necessary for association with microtubule and interaction with GAPDH signature appears at 2 to 6; that stretch reads GSRAS. 4 EF-hand domains span residues 26–61, 66–101, 110–145, and 151–186; these read SQIT…AINP, IINA…KSKD, SRSN…MVGV, and QLGS…VDVE. Positions 123, 125, 127, 129, and 134 each coordinate Ca(2+). A Nuclear export signal 1 motif is present at residues 138–147; sequence VLRMMVGVNI. Residues 143 to 185 are necessary for nuclear export signal; it reads VGVNISDEQLGSIADRTIQEADQDGDSAISFTEFVKVLEKVDV. The Ca(2+) site is built by Asp164, Asp166, Asp168, and Glu175. Residues 176-185 carry the Nuclear export signal 2 motif; the sequence is FVKVLEKVDV.

It belongs to the calcineurin regulatory subunit family. CHP subfamily. As to quaternary structure, monomer. Interacts with STK17B; the interaction occurs in a calcium-independent manner and induces the translocation of CHP1 from the Golgi to the nucleus. Interacts with GAPDH; the interaction is direct, occurs in a N-myristoylation-dependent manner and facilitates the ability of CHP1 to bind microtubules. Interacts with KIF1B (via the C-terminal end of the kinesin-motor domain); the interaction occurs in a calcium-dependent manner. Associates (via C-terminal domain) with microtubules; the association occurs with polymerized microtubules during the cell cycle in a myristoylation- and calcium-independent manner and is enhanced by GAPDH. Interacts with PPP3CA. Interacts with SLC9A1/NHE1 (via the C-terminal domain); the interaction occurs at the plasma membrane in a calcium-dependent manner and at a domain that is critical for growth factor stimulation of the exchanger. Interacts with SLC9A3; increases SLC9A3 trafficking and activity at the plasma membrane. Phosphorylated; decreased phosphorylation is associated with an increase in SLC9A1/NHE1 Na(+)/H(+) exchange activity. Phosphorylation occurs in serum-dependent manner. The phosphorylation state may regulate the binding to SLC9A1/NHE1. In terms of processing, both N-myristoylation and calcium-mediated conformational changes are essential for its function in exocytic traffic. N-myristoylation is required for its association with microtubules and interaction with GAPDH, but not for the constitutive association to membranes. Ubiquitously expressed. Has been found in fetal eye, lung, liver, muscle, heart, kidney, thymus and spleen.

Its subcellular location is the nucleus. It is found in the cytoplasm. The protein localises to the cytoskeleton. It localises to the endomembrane system. The protein resides in the endoplasmic reticulum-Golgi intermediate compartment. Its subcellular location is the endoplasmic reticulum. It is found in the cell membrane. The protein localises to the membrane. Functionally, calcium-binding protein involved in different processes such as regulation of vesicular trafficking, plasma membrane Na(+)/H(+) exchanger and gene transcription. Involved in the constitutive exocytic membrane traffic. Mediates the association between microtubules and membrane-bound organelles of the endoplasmic reticulum and Golgi apparatus and is also required for the targeting and fusion of transcytotic vesicles (TCV) with the plasma membrane. Functions as an integral cofactor in cell pH regulation by controlling plasma membrane-type Na(+)/H(+) exchange activity. Affects the pH sensitivity of SLC9A1/NHE1 by increasing its sensitivity at acidic pH. Required for the stabilization and localization of SLC9A1/NHE1 at the plasma membrane. Inhibits serum- and GTPase-stimulated Na(+)/H(+) exchange. Plays a role as an inhibitor of ribosomal RNA transcription by repressing the nucleolar UBF1 transcriptional activity. May sequester UBF1 in the nucleoplasm and limit its translocation to the nucleolus. Associates to the ribosomal gene promoter. Acts as a negative regulator of the calcineurin/NFAT signaling pathway. Inhibits NFAT nuclear translocation and transcriptional activity by suppressing the calcium-dependent calcineurin phosphatase activity. Also negatively regulates the kinase activity of the apoptosis-induced kinase STK17B. Inhibits both STK17B auto- and substrate-phosphorylations in a calcium-dependent manner. The polypeptide is Calcineurin B homologous protein 1 (CHP1) (Homo sapiens (Human)).